We begin with the raw amino-acid sequence, 529 residues long: UDP-glucuronosyltransferase 2B1 (529 aa).

The first 23 residues, 1–23 (MSMKQTSVFLLIQLICYFRPGAC), serve as a signal peptide directing secretion. 2 N-linked (GlcNAc...) asparagine glycosylation sites follow: Asn134 and Asn316. A helical transmembrane segment spans residues 494–510 (VIGFLLLCVVGVVFIIT).

This sequence belongs to the UDP-glycosyltransferase family.

Its subcellular location is the endoplasmic reticulum membrane. The enzyme catalyses glucuronate acceptor + UDP-alpha-D-glucuronate = acceptor beta-D-glucuronoside + UDP + H(+). The catalysed reaction is 17beta-estradiol + UDP-alpha-D-glucuronate = 17beta-estradiol 17-O-(beta-D-glucuronate) + UDP + H(+). UDP-glucuronosyltransferase (UGT) that catalyzes phase II biotransformation reactions in which lipophilic substrates are conjugated with glucuronic acid to increase the metabolite's water solubility, thereby facilitating excretion into either the urine or bile. Essential for the elimination and detoxification of drugs, xenobiotics and endogenous compounds. Catalyzes the glucuronidation of the endogenous estrogen hormone estradiol. The sequence is that of UDP-glucuronosyltransferase 2B1 from Rattus norvegicus (Rat).